The chain runs to 741 residues: MVKSRKISILLAVAMLVSIMIPTTAFAGPTKAPTKDGTSYKDLFLELYGKIKDPKNGYFSPDEGIPYHSIETLIVEAPDYGHVTTSEAFSYYVWLEAMYGNLTGNWSGVETAWKVMEDWIIPDSTEQPGMSSYNPNSPATYADEYEDPSYYPSELKFDTVRVGSDPVHNDLVSAYGPNMYLMHWLMDVDNWYGFGTGTRATFINTFQRGEQESTWETIPHPSIEEFKYGGPNGFLDLFTKDRSYAKQWRYTNAPDAEGRAIQAVYWANKWAKEQGKGSAVASVVSKAAKMGDFLRNDMFDKYFMKIGAQDKTPATGYDSAHYLMAWYTAWGGGIGASWAWKIGCSHAHFGYQNPFQGWVSATQSDFAPKSSNGKRDWTTSYKRQLEFYQWLQSAEGGIAGGATNSWNGRYEKYPAGTSTFYGMAYVPHPVYADPGSNQWFGFQAWSMQRVMEYYLETGDSSVKNLIKKWVDWVMSEIKLYDDGTFAIPSDLEWSGQPDTWTGTYTGNPNLHVRVTSYGTDLGVAGSLANALATYAAATERWEGKLDTKARDMAAELVNRAWYNFYCSEGKGVVTEEARADYKRFFEQEVYVPAGWSGTMPNGDKIQPGIKFIDIRTKYRQDPYYDIVYQAYLRGEAPVLNYHRFWHEVDLAVAMGVLATYFPDMTYKVPGTPSTKLYGDVNDDGKVNSTDAVALKRYVLRSGISINTDNADLNEDGRVNSTDLGILKRYILKEIDTLPYKN.

An N-terminal signal peptide occupies residues 1–27; sequence MVKSRKISILLAVAMLVSIMIPTTAFA. Glutamate 76 is a binding site for substrate. Glutamate 87 serves as the catalytic Proton donor. Residues threonine 140, asparagine 204, aspartate 241, glutamine 247, and 251-252 each bind substrate; that span reads TN. The active-site Nucleophile is aspartate 255. Residues 301–302, 326–327, tyrosine 421, aspartate 520, and 645–646 each bind substrate; these read KY, WY, and WH. Residues 673 to 739 enclose the Dockerin domain; the sequence is STKLYGDVND…ILKEIDTLPY (67 aa). Positions 679, 681, 683, 684, 685, 690, 711, 712, 713, 715, 717, and 722 each coordinate Ca(2+).

The protein belongs to the glycosyl hydrolase 48 (cellulase L) family.

The protein resides in the secreted. It catalyses the reaction Hydrolysis of (1-&gt;4)-beta-D-glucosidic linkages in cellulose and similar substrates, releasing cellobiose from the reducing ends of the chains.. Inhibited by cellobiose and lactose, but not by glucose. Its function is as follows. This enzyme catalyzes the exohydrolysis of 1,4-beta-glucosidic linkages in cellulose with a preference for amorphous or crystalline cellulose over carboxymethyl cellulose. This chain is Cellulose 1,4-beta-cellobiosidase (reducing end) CelS (celS), found in Acetivibrio thermocellus (strain ATCC 27405 / DSM 1237 / JCM 9322 / NBRC 103400 / NCIMB 10682 / NRRL B-4536 / VPI 7372) (Clostridium thermocellum).